The primary structure comprises 220 residues: Cytidylate kinase (220 aa).

10–18 (GPASSGKST) lines the ATP pocket.

This sequence belongs to the cytidylate kinase family. Type 1 subfamily.

It localises to the cytoplasm. It catalyses the reaction CMP + ATP = CDP + ADP. The catalysed reaction is dCMP + ATP = dCDP + ADP. This Lactococcus lactis subsp. lactis (strain IL1403) (Streptococcus lactis) protein is Cytidylate kinase.